Consider the following 374-residue polypeptide: Chaperone protein DnaJ (374 aa).

Positions 5 to 70 constitute a J domain; that stretch reads DYYEVLGVER…SKRAAFDQYG (66 aa). A CR-type zinc finger spans residues 133 to 211; the sequence is GTTVSIRVPT…CHGEGRVEEY (79 aa). Residues C146, C149, C163, C166, C185, C188, C199, and C202 each coordinate Zn(2+). CXXCXGXG motif repeat units lie at residues 146–153, 163–170, 185–192, and 199–206; these read CQPCDGSG, CPTCGGIG, CPRCHGQG, and CTSCHGEG.

This sequence belongs to the DnaJ family. In terms of assembly, homodimer. Zn(2+) serves as cofactor.

The protein resides in the cytoplasm. Participates actively in the response to hyperosmotic and heat shock by preventing the aggregation of stress-denatured proteins and by disaggregating proteins, also in an autonomous, DnaK-independent fashion. Unfolded proteins bind initially to DnaJ; upon interaction with the DnaJ-bound protein, DnaK hydrolyzes its bound ATP, resulting in the formation of a stable complex. GrpE releases ADP from DnaK; ATP binding to DnaK triggers the release of the substrate protein, thus completing the reaction cycle. Several rounds of ATP-dependent interactions between DnaJ, DnaK and GrpE are required for fully efficient folding. Also involved, together with DnaK and GrpE, in the DNA replication of plasmids through activation of initiation proteins. In Pseudomonas putida (strain GB-1), this protein is Chaperone protein DnaJ.